Consider the following 236-residue polypeptide: Octanoyltransferase (236 aa).

A BPL/LPL catalytic domain is found at 36–220 (DQVPDTVLLL…HLAAVLGASS (185 aa)). Substrate contacts are provided by residues 76-83 (RGGKITWH), 150-152 (AIG), and 163-165 (GFA). The active-site Acyl-thioester intermediate is Cys-181.

The protein belongs to the LipB family.

Its subcellular location is the cytoplasm. It catalyses the reaction octanoyl-[ACP] + L-lysyl-[protein] = N(6)-octanoyl-L-lysyl-[protein] + holo-[ACP] + H(+). The protein operates within protein modification; protein lipoylation via endogenous pathway; protein N(6)-(lipoyl)lysine from octanoyl-[acyl-carrier-protein]: step 1/2. Functionally, catalyzes the transfer of endogenously produced octanoic acid from octanoyl-acyl-carrier-protein onto the lipoyl domains of lipoate-dependent enzymes. Lipoyl-ACP can also act as a substrate although octanoyl-ACP is likely to be the physiological substrate. This chain is Octanoyltransferase, found in Thermobifida fusca (strain YX).